The chain runs to 98 residues: MEIRVIDTKENKLLGRKEIYFEVIHEGEPTPSRADVKGKLVAMLDLNPEATVVQYIRSYFGSHVSEGYAKAYESKERMLYIEPEYVLRREGIIQEQEE.

Belongs to the eukaryotic ribosomal protein eS24 family.

This Thermococcus sibiricus (strain DSM 12597 / MM 739) protein is Small ribosomal subunit protein eS24.